We begin with the raw amino-acid sequence, 56 residues long: Large ribosomal subunit protein eL37 (56 aa).

The Zn(2+) site is built by Cys-19, Cys-22, Cys-34, and Cys-37. A C4-type zinc finger spans residues 19-37; the sequence is CRRCGSVSLNIHTKQCTSC.

This sequence belongs to the eukaryotic ribosomal protein eL37 family. It depends on Zn(2+) as a cofactor.

Functionally, binds to the 23S rRNA. The polypeptide is Large ribosomal subunit protein eL37 (Methanococcoides burtonii (strain DSM 6242 / NBRC 107633 / OCM 468 / ACE-M)).